The following is a 378-amino-acid chain: Succinyl-diaminopimelate desuccinylase (378 aa).

Histidine 68 lines the Zn(2+) pocket. Aspartate 70 is an active-site residue. Aspartate 101 is a Zn(2+) binding site. Residue glutamate 135 is the Proton acceptor of the active site. Glutamate 136, glutamate 164, and histidine 350 together coordinate Zn(2+).

Belongs to the peptidase M20A family. DapE subfamily. Homodimer. The cofactor is Zn(2+). Co(2+) is required as a cofactor.

It carries out the reaction N-succinyl-(2S,6S)-2,6-diaminopimelate + H2O = (2S,6S)-2,6-diaminopimelate + succinate. It functions in the pathway amino-acid biosynthesis; L-lysine biosynthesis via DAP pathway; LL-2,6-diaminopimelate from (S)-tetrahydrodipicolinate (succinylase route): step 3/3. In terms of biological role, catalyzes the hydrolysis of N-succinyl-L,L-diaminopimelic acid (SDAP), forming succinate and LL-2,6-diaminopimelate (DAP), an intermediate involved in the bacterial biosynthesis of lysine and meso-diaminopimelic acid, an essential component of bacterial cell walls. The polypeptide is Succinyl-diaminopimelate desuccinylase (Vibrio atlanticus (strain LGP32) (Vibrio splendidus (strain Mel32))).